We begin with the raw amino-acid sequence, 116 residues long: Large ribosomal subunit protein bL20 (116 aa).

The protein belongs to the bacterial ribosomal protein bL20 family.

Binds directly to 23S ribosomal RNA and is necessary for the in vitro assembly process of the 50S ribosomal subunit. It is not involved in the protein synthesizing functions of that subunit. This is Large ribosomal subunit protein bL20 from Bacteroides thetaiotaomicron (strain ATCC 29148 / DSM 2079 / JCM 5827 / CCUG 10774 / NCTC 10582 / VPI-5482 / E50).